The chain runs to 82 residues: Large ribosomal subunit protein bL28 (82 aa).

This sequence belongs to the bacterial ribosomal protein bL28 family.

This is Large ribosomal subunit protein bL28 from Vesicomyosocius okutanii subsp. Calyptogena okutanii (strain HA).